Consider the following 82-residue polypeptide: MVSIRLSRGGSKKRPFYHLTVTDSRKSRDGRFIERVGFFNPVARGQEERLRVESERLNYWLSQGAQCSERVAKLIKDAAAAA.

Belongs to the bacterial ribosomal protein bS16 family.

This chain is Small ribosomal subunit protein bS16, found in Saccharophagus degradans (strain 2-40 / ATCC 43961 / DSM 17024).